A 70-amino-acid chain; its full sequence is ATP synthase subunit c (70 aa).

Transmembrane regions (helical) follow at residues 5–25 (AAGIAAGLAAVGGAIAVAIIV) and 47–67 (FIGVPLAEAVPIIAIVVSFIL).

The protein belongs to the ATPase C chain family. In terms of assembly, F-type ATPases have 2 components, F(1) - the catalytic core - and F(0) - the membrane proton channel. F(1) has five subunits: alpha(3), beta(3), gamma(1), delta(1), epsilon(1). F(0) has three main subunits: a(1), b(2) and c(10-14). The alpha and beta chains form an alternating ring which encloses part of the gamma chain. F(1) is attached to F(0) by a central stalk formed by the gamma and epsilon chains, while a peripheral stalk is formed by the delta and b chains.

The protein localises to the cell membrane. Its function is as follows. F(1)F(0) ATP synthase produces ATP from ADP in the presence of a proton or sodium gradient. F-type ATPases consist of two structural domains, F(1) containing the extramembraneous catalytic core and F(0) containing the membrane proton channel, linked together by a central stalk and a peripheral stalk. During catalysis, ATP synthesis in the catalytic domain of F(1) is coupled via a rotary mechanism of the central stalk subunits to proton translocation. In terms of biological role, key component of the F(0) channel; it plays a direct role in translocation across the membrane. A homomeric c-ring of between 10-14 subunits forms the central stalk rotor element with the F(1) delta and epsilon subunits. The protein is ATP synthase subunit c of Halalkalibacterium halodurans (strain ATCC BAA-125 / DSM 18197 / FERM 7344 / JCM 9153 / C-125) (Bacillus halodurans).